The following is a 547-amino-acid chain: Inositol-tetrakisphosphate 1-kinase 6 (547 aa).

Lys-263 provides a ligand contact to 1D-myo-inositol 1,3,4-trisphosphate. The ATP site is built by Arg-317 and Lys-370. The region spanning Leu-327–Glu-539 is the ATP-grasp domain. 1D-myo-inositol 1,3,4-trisphosphate contacts are provided by His-381 and Lys-415. Residues Gln-404 to Lys-415, Ser-430, and Ser-450 contribute to the ATP site. Asp-497, Asp-511, and Asn-513 together coordinate Mg(2+). 1D-myo-inositol 1,3,4-trisphosphate is bound by residues Asn-513 and Ser-517.

The protein belongs to the ITPK1 family. In terms of assembly, monomer. Mg(2+) is required as a cofactor.

It catalyses the reaction 1D-myo-inositol 3,4,5,6-tetrakisphosphate + ATP = 1D-myo-inositol 1,3,4,5,6-pentakisphosphate + ADP + H(+). The enzyme catalyses 1D-myo-inositol 1,3,4-trisphosphate + ATP = 1D-myo-inositol 1,3,4,5-tetrakisphosphate + ADP + H(+). It carries out the reaction 1D-myo-inositol 1,3,4-trisphosphate + ATP = 1D-myo-inositol 1,3,4,6-tetrakisphosphate + ADP + H(+). Kinase that can phosphorylate various inositol polyphosphate such as Ins(3,4,5,6)P4 or Ins(1,3,4)P3 and participates in phytic acid biosynthesis in developing seeds. Phytic acid is the primary storage form of phosphorus in cereal grains and other plant seeds. This Oryza sativa subsp. indica (Rice) protein is Inositol-tetrakisphosphate 1-kinase 6.